The following is a 350-amino-acid chain: Nicotinate-nucleotide--dimethylbenzimidazole phosphoribosyltransferase (350 aa).

The active-site Proton acceptor is the Glu316.

The protein belongs to the CobT family.

It carries out the reaction 5,6-dimethylbenzimidazole + nicotinate beta-D-ribonucleotide = alpha-ribazole 5'-phosphate + nicotinate + H(+). Its pathway is nucleoside biosynthesis; alpha-ribazole biosynthesis; alpha-ribazole from 5,6-dimethylbenzimidazole: step 1/2. Catalyzes the synthesis of alpha-ribazole-5'-phosphate from nicotinate mononucleotide (NAMN) and 5,6-dimethylbenzimidazole (DMB). In Pseudomonas syringae pv. syringae (strain B728a), this protein is Nicotinate-nucleotide--dimethylbenzimidazole phosphoribosyltransferase.